The following is a 130-amino-acid chain: Small ribosomal subunit protein uS8 (130 aa).

Belongs to the universal ribosomal protein uS8 family. In terms of assembly, part of the 30S ribosomal subunit. Contacts proteins S5 and S12.

One of the primary rRNA binding proteins, it binds directly to 16S rRNA central domain where it helps coordinate assembly of the platform of the 30S subunit. The chain is Small ribosomal subunit protein uS8 from Pseudomonas fluorescens (strain Pf0-1).